Reading from the N-terminus, the 368-residue chain is Microtubule-associated protein Jupiter (368 aa).

Ser-30 carries the phosphoserine modification. Residue Thr-41 is modified to Phosphothreonine. The segment covering 81–93 (RRGQKSVDSHSRL) has biased composition (basic and acidic residues). The segment at 81–106 (RRGQKSVDSHSRLFGEPSRPITPGKN) is disordered. Phosphothreonine is present on Thr-102. Ser-111, Ser-146, and Ser-157 each carry phosphoserine. Composition is skewed to low complexity over residues 129 to 157 (NGNT…VSSS) and 238 to 248 (GRYGYSSQSRR). Disordered stretches follow at residues 129–164 (NGNT…LKIN), 196–256 (SQGN…SPLN), and 316–368 (KPKK…SGLW). Over residues 337 to 354 (GSDSAQTPTMNGANQVIN) the composition is skewed to polar residues.

The protein belongs to the MAP Jupiter family.

Its subcellular location is the nucleus. The protein localises to the cytoplasm. It is found in the cytoskeleton. It localises to the spindle. Binds to all microtubule populations. The polypeptide is Microtubule-associated protein Jupiter (Drosophila willistoni (Fruit fly)).